Reading from the N-terminus, the 247-residue chain is Probable transcriptional regulatory protein Glov_1245 (247 aa).

Belongs to the TACO1 family.

It is found in the cytoplasm. This Trichlorobacter lovleyi (strain ATCC BAA-1151 / DSM 17278 / SZ) (Geobacter lovleyi) protein is Probable transcriptional regulatory protein Glov_1245.